The primary structure comprises 81 residues: Cytotoxin 5b (81 aa).

The first 21 residues, 1–21 (MKTLLLTLLVVTIVCLDLGYT), serve as a signal peptide directing secretion. Cystine bridges form between Cys24–Cys42, Cys35–Cys59, Cys63–Cys74, and Cys75–Cys80.

Belongs to the three-finger toxin family. Short-chain subfamily. Type IA cytotoxin sub-subfamily. In terms of assembly, monomer in solution; Homodimer and oligomer in the presence of negatively charged lipids forming a pore with a size ranging between 20 and 30 Angstroms. In terms of tissue distribution, expressed by the venom gland.

Its subcellular location is the secreted. It localises to the target cell membrane. Shows cytolytic activity on many different cells by forming pore in lipid membranes. In vivo, increases heart rate or kills the animal by cardiac arrest. In addition, it binds to heparin with high affinity, interacts with Kv channel-interacting protein 1 (KCNIP1) in a calcium-independent manner, and binds to integrin alpha-V/beta-3 (ITGAV/ITGB3) with moderate affinity. The chain is Cytotoxin 5b from Naja sputatrix (Malayan spitting cobra).